The chain runs to 331 residues: Hyaluronidase A (331 aa).

2 cysteine pairs are disulfide-bonded: Cys-19/Cys-308 and Cys-185/Cys-197. Residues Asn-79 and Asn-99 are each glycosylated (N-linked (GlcNAc...) asparagine). Glu-109 functions as the Proton donor in the catalytic mechanism. A glycan (N-linked (GlcNAc...) asparagine) is linked at Asn-127. Asn-325 carries an N-linked (GlcNAc...) asparagine glycan.

It belongs to the glycosyl hydrolase 56 family. As to expression, expressed by the venom gland.

It localises to the secreted. The catalysed reaction is Random hydrolysis of (1-&gt;4)-linkages between N-acetyl-beta-D-glucosamine and D-glucuronate residues in hyaluronate.. In terms of biological role, hydrolyzes high molecular weight hyaluronic acid to produce small oligosaccharides. This Vespula vulgaris (Yellow jacket) protein is Hyaluronidase A.